The sequence spans 249 residues: General transcription factor IIF subunit 2 (249 aa).

The residue at position 2 (Ala-2) is an N-acetylalanine. Residues Lys-22, Lys-33, and Lys-137 each carry the N6-acetyllysine modification. At Ser-142 the chain carries Phosphoserine. Positions 227 and 229 each coordinate DNA. Position 248 is a phosphoserine (Ser-248).

The protein belongs to the TFIIF beta subunit family. Heterodimer of an alpha and a beta subunit. Interacts with HTATSF1 and GPBP1. Interacts with URI1. Interacts with GTF2B (via N-terminus); this interaction is inhibited in presence of GTF2F1. Part of TBP-based Pol II pre-initiation complex (PIC), in which Pol II core assembles with general transcription factors and other specific initiation factors including GTF2E1, GTF2E2, GTF2F1, GTF2F2, TCEA1, ERCC2, ERCC3, GTF2H2, GTF2H3, GTF2H4, GTF2H5, GTF2A1, GTF2A2, GTF2B and TBP; this large multi-subunit PIC complex mediates DNA unwinding and targets Pol II core to the transcription start site where the first phosphodiester bond forms.

It localises to the nucleus. TFIIF is a general transcription initiation factor that binds to RNA polymerase II and helps to recruit it to the initiation complex in collaboration with TFIIB. This Bos taurus (Bovine) protein is General transcription factor IIF subunit 2 (GTF2F2).